The following is a 432-amino-acid chain: Gamma-glutamyl phosphate reductase (432 aa).

Belongs to the gamma-glutamyl phosphate reductase family.

It localises to the cytoplasm. The catalysed reaction is L-glutamate 5-semialdehyde + phosphate + NADP(+) = L-glutamyl 5-phosphate + NADPH + H(+). It participates in amino-acid biosynthesis; L-proline biosynthesis; L-glutamate 5-semialdehyde from L-glutamate: step 2/2. Catalyzes the NADPH-dependent reduction of L-glutamate 5-phosphate into L-glutamate 5-semialdehyde and phosphate. The product spontaneously undergoes cyclization to form 1-pyrroline-5-carboxylate. The polypeptide is Gamma-glutamyl phosphate reductase (Methylobacterium radiotolerans (strain ATCC 27329 / DSM 1819 / JCM 2831 / NBRC 15690 / NCIMB 10815 / 0-1)).